A 1456-amino-acid chain; its full sequence is Leucine-rich repeat-containing protein 9 (1456 aa).

8 LRR repeats span residues 53 to 78 (FHNL…CLQL), 97 to 119 (CRNL…LEKL), 120 to 141 (IKLE…LQTL), 142 to 164 (KNLK…LDPN), 166 to 188 (QLEK…NLTK), 190 to 212 (TRLK…QLCN), 224 to 248 (LQRL…AMKK), and 264 to 287 (NEEL…RIKL). The segment at 305 to 325 (SSKGQSDTTPEAEKPRNSEVV) is disordered. Residues 339–362 (LSALDDRVTFWNKKLHEIEAIYRT) form an LRR 9 repeat. A Phosphotyrosine modification is found at Tyr-525. LRR repeat units follow at residues 661-683 (KPRP…TNIY), 684-705 (SHIV…LAKL), 706-727 (TGLR…VYHL), 729-748 (NLEY…GFRG), 749-772 (LMKL…INVL), 776-802 (TTSL…VIGR), 806-833 (LTHL…KITQ), 876-898 (YSKI…LEKL), 899-920 (ENLK…LESC), 921-942 (VNLE…ITRL), 943-965 (TKLS…TFDN), 967-991 (LHLH…TFTL), 993-1010 (ELYI…IYNL), 1013-1037 (LCNL…RFFV), 1082-1105 (FIQM…PVDH), 1106-1128 (FRNV…LIYL), 1129-1151 (PNVK…LKPQ), 1191-1214 (MQSL…QLNR), 1215-1237 (LRNL…LDNL), 1238-1260 (IVLQ…AFSK), 1262-1283 (SSLL…LQSL), 1284-1307 (VKLE…KLDV), and 1309-1335 (PSLR…IFRL).

This Mus musculus (Mouse) protein is Leucine-rich repeat-containing protein 9 (Lrrc9).